We begin with the raw amino-acid sequence, 276 residues long: Large ribosomal subunit protein uL2 (276 aa).

A disordered region spans residues 224–276; it reads VMNPVDHPHGGGEGKAPIGRKSPMTPWGKPTLGYKTRKKKNKSDKFIIRRRKK. Positions 258–276 are enriched in basic residues; the sequence is KTRKKKNKSDKFIIRRRKK.

It belongs to the universal ribosomal protein uL2 family. In terms of assembly, part of the 50S ribosomal subunit. Forms a bridge to the 30S subunit in the 70S ribosome.

Functionally, one of the primary rRNA binding proteins. Required for association of the 30S and 50S subunits to form the 70S ribosome, for tRNA binding and peptide bond formation. It has been suggested to have peptidyltransferase activity; this is somewhat controversial. Makes several contacts with the 16S rRNA in the 70S ribosome. The polypeptide is Large ribosomal subunit protein uL2 (Geobacillus thermodenitrificans (strain NG80-2)).